The primary structure comprises 109 residues: Cell division suppressor protein YneA (109 aa).

A LysM domain is found at 39–90 (SEVNVSEGDSLWALADQYAGKSDMAKADFVSWVEKENNLADGHVEAGDSVVI).

The protein belongs to the YneA family.

It is found in the cytoplasm. In terms of biological role, inhibits cell division during the SOS response. Affects a later stage of the cell division protein assembly, after the assembly of the Z ring, by probably suppressing recruitment of FtsL and/or DivIC to the division machinery. The polypeptide is Cell division suppressor protein YneA (Listeria monocytogenes serotype 4b (strain CLIP80459)).